The chain runs to 651 residues: Probable potassium transport system protein Kup (651 aa).

12 helical membrane passes run 41–61, 82–102, 130–150, 163–183, 194–214, 235–255, 276–296, 309–329, 366–386, 395–415, 426–446, and 450–470; these read LVLGALGVVYGDIGTSPIYAF, VVSLIFWALTLVVTVKYVLFV, LILGVGICGAALFFGDAVITP, IVAPNLTPFVVPATVVILVTL, VAIVFGPIMALWFVALGASGL, FLTVSPAVAFVTVGAVFLAMT, WLWIVFPCLLLNYFGQAAFIL, MIPSFALWPMVLLATAATVIA, IYIPRVNLLLGLAVVILVLGF, AYGIAVTGNMLVTTVLLYIVM, ALPIILGFLVIDMLFFSANII, and EGGWASIGIATVLVLIMWTWV.

This sequence belongs to the HAK/KUP transporter (TC 2.A.72) family.

The protein resides in the cell inner membrane. It carries out the reaction K(+)(in) + H(+)(in) = K(+)(out) + H(+)(out). Functionally, transport of potassium into the cell. Likely operates as a K(+):H(+) symporter. This Brucella suis (strain ATCC 23445 / NCTC 10510) protein is Probable potassium transport system protein Kup.